The primary structure comprises 146 residues: Large ribosomal subunit protein uL15 (146 aa).

2 stretches are compositionally biased toward basic residues: residues 1-13 (MIRK…RMRG) and 22-38 (SKKR…GQAG). A disordered region spans residues 1–38 (MIRKRRKITRMRGSRTVGGGCSKKRRGAGHRGGRGQAG).

The protein belongs to the universal ribosomal protein uL15 family. In terms of assembly, part of the 50S ribosomal subunit.

Its function is as follows. Binds to the 23S rRNA. The chain is Large ribosomal subunit protein uL15 from Methanothermobacter thermautotrophicus (strain ATCC 29096 / DSM 1053 / JCM 10044 / NBRC 100330 / Delta H) (Methanobacterium thermoautotrophicum).